Reading from the N-terminus, the 453-residue chain is Methionine aminopeptidase 2-1 (453 aa).

Residues 1–12 (MGSKTPDGHRQS) show a composition bias toward basic and acidic residues. The segment at 1–101 (MGSKTPDGHR…TTPPRVPLST (101 aa)) is disordered. Positions 46–57 (GEDDDDDDENEE) are enriched in acidic residues. Basic residues predominate over residues 67-82 (KKKKRKKSKKKNKKSK). Residue His-210 coordinates substrate. A divalent metal cation contacts are provided by Asp-231, Asp-242, and His-306. Residue His-314 coordinates substrate. A divalent metal cation contacts are provided by Glu-339 and Glu-434.

This sequence belongs to the peptidase M24A family. Methionine aminopeptidase eukaryotic type 2 subfamily. The cofactor is Co(2+). Zn(2+) serves as cofactor. It depends on Mn(2+) as a cofactor. Fe(2+) is required as a cofactor.

The protein resides in the cytoplasm. It carries out the reaction Release of N-terminal amino acids, preferentially methionine, from peptides and arylamides.. Functionally, cotranslationally removes the N-terminal methionine from nascent proteins. The N-terminal methionine is often cleaved when the second residue in the primary sequence is small and uncharged (Met-Ala-, Cys, Gly, Pro, Ser, Thr, or Val). The chain is Methionine aminopeptidase 2-1 from Aspergillus terreus (strain NIH 2624 / FGSC A1156).